Here is a 299-residue protein sequence, read N- to C-terminus: Taste receptor type 2 member 50 (299 aa).

Methionine 1 is a topological domain (extracellular). The chain crosses the membrane as a helical span at residues 2-22 (ITFLYIFFSILIMVLFVLGNF). The Cytoplasmic segment spans residues 23-55 (ANGFIALVNFIDWVKRKKISSADQILTALAVSR). Residues 56–76 (IGLLWALLLNWYLTVLNPAFY) form a helical membrane-spanning segment. At 77–87 (SVELRITSYNA) the chain is on the extracellular side. A helical transmembrane segment spans residues 88–108 (WVVTNHFSMWLAANLSIFYLL). Over 109-126 (KIANFSNLLFLHLKRRVR) the chain is Cytoplasmic. A helical transmembrane segment spans residues 127-147 (SVILVILLGTLIFLVCHLLVA). Residues 148–181 (NMDESMWAEEYEGNMTGKMKLRNTVHLSYLTVTT) lie on the Extracellular side of the membrane. Asparagine 161 carries an N-linked (GlcNAc...) asparagine glycan. Residues 182–202 (LWSFIPFTLSLISFLMLICSL) traverse the membrane as a helical segment. The Cytoplasmic portion of the chain corresponds to 203 to 229 (CKHLKKMQLHGEGSQDLSTKVHIKALQ). A helical membrane pass occupies residues 230 to 250 (TLISFLLLCAIFFLFLIVSVW). The Extracellular segment spans residues 251-259 (SPRRLRNDP). The chain crosses the membrane as a helical span at residues 260–280 (VVMVSKAVGNIYLAFDSFILI). Topologically, residues 281-299 (WRTKKLKHTFLLILCQIRC) are cytoplasmic.

This sequence belongs to the G-protein coupled receptor T2R family. As to expression, expressed in subsets of taste receptor cells of the tongue and exclusively in gustducin-positive cells.

The protein resides in the membrane. Its function is as follows. Receptor that may play a role in the perception of bitterness and is gustducin-linked. May play a role in sensing the chemical composition of the gastrointestinal content. The activity of this receptor may stimulate alpha gustducin, mediate PLC-beta-2 activation and lead to the gating of TRPM5. The polypeptide is Taste receptor type 2 member 50 (TAS2R50) (Homo sapiens (Human)).